A 186-amino-acid polypeptide reads, in one-letter code: Secreted chorismate mutase (186 aa).

Residues 1–30 (MQPTHTLTRLTVIGKLIIASSFFLSLAVQA) form the signal peptide. The 77-residue stretch at 31 to 107 (QQCGQTAPLI…AAKAIQYRYR (77 aa)) folds into the Chorismate mutase domain. An intrachain disulfide couples C33 to C148. Substrate contacts are provided by residues R43, K54, D63, 99 to 103 (AKAIQ), and R127.

As to quaternary structure, homodimer.

The protein localises to the periplasm. The catalysed reaction is chorismate = prephenate. It functions in the pathway metabolic intermediate biosynthesis; prephenate biosynthesis; prephenate from chorismate: step 1/1. Functionally, catalyzes the Claisen rearrangement of chorismate to prephenate. May play some role in the pathogenicity. The sequence is that of Secreted chorismate mutase (pheA2) from Yersinia pestis.